Here is a 463-residue protein sequence, read N- to C-terminus: Probable multidrug resistance protein YoeA (463 aa).

Helical transmembrane passes span 24 to 44 (LFLV…LVGM), 56 to 76 (VAAV…TIGI), 106 to 126 (FTFL…LDIL), 143 to 163 (ARIL…TTFL), 177 to 197 (IVST…MFGF), 202 to 222 (IYGS…VLMV), 256 to 276 (VPAS…ISFV), 293 to 313 (VASY…IFAA), 330 to 350 (VGIW…YVFS), 370 to 390 (LLMI…ISAT), 397 to 417 (VLWP…PVAF), and 427 to 447 (ILGV…LIYG).

The protein belongs to the multi antimicrobial extrusion (MATE) (TC 2.A.66.1) family.

It is found in the cell membrane. The polypeptide is Probable multidrug resistance protein YoeA (yoeA) (Bacillus subtilis (strain 168)).